A 95-amino-acid chain; its full sequence is Aspartyl/glutamyl-tRNA(Asn/Gln) amidotransferase subunit C (95 aa).

The protein belongs to the GatC family. Heterotrimer of A, B and C subunits.

It carries out the reaction L-glutamyl-tRNA(Gln) + L-glutamine + ATP + H2O = L-glutaminyl-tRNA(Gln) + L-glutamate + ADP + phosphate + H(+). The catalysed reaction is L-aspartyl-tRNA(Asn) + L-glutamine + ATP + H2O = L-asparaginyl-tRNA(Asn) + L-glutamate + ADP + phosphate + 2 H(+). In terms of biological role, allows the formation of correctly charged Asn-tRNA(Asn) or Gln-tRNA(Gln) through the transamidation of misacylated Asp-tRNA(Asn) or Glu-tRNA(Gln) in organisms which lack either or both of asparaginyl-tRNA or glutaminyl-tRNA synthetases. The reaction takes place in the presence of glutamine and ATP through an activated phospho-Asp-tRNA(Asn) or phospho-Glu-tRNA(Gln). In Halorhodospira halophila (strain DSM 244 / SL1) (Ectothiorhodospira halophila (strain DSM 244 / SL1)), this protein is Aspartyl/glutamyl-tRNA(Asn/Gln) amidotransferase subunit C.